Here is a 310-residue protein sequence, read N- to C-terminus: UDP-N-acetylenolpyruvoylglucosamine reductase (310 aa).

The region spanning 35 to 199 (VGGPAQALFT…TSARFRGTPA (165 aa)) is the FAD-binding PCMH-type domain. R179 is a catalytic residue. Residue S228 is the Proton donor of the active site. The active site involves E298.

This sequence belongs to the MurB family. FAD serves as cofactor.

The protein resides in the cytoplasm. The catalysed reaction is UDP-N-acetyl-alpha-D-muramate + NADP(+) = UDP-N-acetyl-3-O-(1-carboxyvinyl)-alpha-D-glucosamine + NADPH + H(+). The protein operates within cell wall biogenesis; peptidoglycan biosynthesis. In terms of biological role, cell wall formation. This is UDP-N-acetylenolpyruvoylglucosamine reductase from Rhodopseudomonas palustris (strain BisB5).